Here is a 387-residue protein sequence, read N- to C-terminus: Protein NDRG3 (387 aa).

The tract at residues 329–387 (PSASMTRLVRSRTHSASSSGSMEMPRSRSHTSNAQLQSTSNNSLSNQIQETPHTIELSC) is disordered. Residues 359-377 (TSNAQLQSTSNNSLSNQIQ) show a composition bias toward low complexity.

The protein belongs to the NDRG family.

In Xenopus tropicalis (Western clawed frog), this protein is Protein NDRG3.